The chain runs to 410 residues: Meiotic driver wtf18 (410 aa).

A disordered region spans residues 1–39 (MKNKGYPLRSSMDELSTKNDNEIDLEKGPLPEYNSEDGS). The span at 11-29 (SMDELSTKNDNEIDLEKGP) shows a compositional bias: basic and acidic residues. Helical transmembrane passes span 89 to 109 (LLIS…CVNP), 119 to 139 (AFFV…FCFF), 149 to 169 (CIKV…VFLA), 174 to 194 (VTAV…AKCI), 204 to 224 (CVKV…VGLY), 229 to 249 (DLVV…FGCV), 265 to 285 (CSIS…IWTL), 289 to 309 (LFGL…TKGL), 319 to 339 (ATGY…LFFY), and 353 to 373 (FIGN…GGIG).

It belongs to the WTF family. As to quaternary structure, homomer. Forms protein aggregates. The two isoforms can interact with each other and with themselves. High sequence similarity is required for their interaction.

Its subcellular location is the spore membrane. The protein resides in the vacuole membrane. It localises to the ascus epiplasm. The protein localises to the cytoplasm. It is found in the endoplasmic reticulum membrane. Functionally, promotes unequal transmission of alleles from the parental zygote to progeny spores by acting as poison/antidote system where the poison and antidote proteins are produced from the same locus; the poison component is trans-acting and targets all spores within an ascus whereas the antidote component is spore-specific, leading to poisoning of all progeny that do not inherit the allele. In terms of biological role, localizes isoform 2 to the vacuole thereby facilitating its degradation. In addition to suppressing isoform 2, also suppresses S.pombe strain 972 wtf13 isoform 2. Its function is as follows. Forms toxic aggregates that disrupt spore maturation. This is Meiotic driver wtf18 from Schizosaccharomyces pombe (Fission yeast).